The sequence spans 325 residues: Probable cell division protein WhiA (325 aa).

Residues 273-306 constitute a DNA-binding region (H-T-H motif); that stretch reads SLEELGALADPPLTKDAVAGRIRRLLALADKRAN.

The protein belongs to the WhiA family.

Functionally, involved in cell division and chromosome segregation. The chain is Probable cell division protein WhiA from Frankia casuarinae (strain DSM 45818 / CECT 9043 / HFP020203 / CcI3).